The primary structure comprises 1020 residues: FERM domain-containing protein 4A (1020 aa).

One can recognise an FERM domain in the interval 5–307; that stretch reads RRCQVHLLDD…SQHQFYLDRK (303 aa). The interval 343 to 405 is necessary for interaction with CYTH1; that stretch reads KGKIISGSSG…RLCLREAELT (63 aa). The segment covering 351 to 367 has biased composition (low complexity); that stretch reads SGSLLSSGSQESDSSQS. The disordered stretch occupies residues 351-371; the sequence is SGSLLSSGSQESDSSQSAKKD. Residues 367–401 are a coiled coil; sequence SAKKDMLAALKSRQEALEETLRQRLEELKRLCLRE. Ser515 is modified (phosphoserine). Residues 538-665 form a disordered region; that stretch reads DEDSQVTSTI…MPSTPDLRVR (128 aa). Positions 542–551 are enriched in polar residues; it reads QVTSTISPLQ. Over residues 556 to 572 the composition is skewed to pro residues; the sequence is GLPPRPPSSHNRPPPPQ. Residues 565 to 920 form a necessary for tight junction and adherens junction localization; Requires for interaction with PARD3 region; it reads HNRPPPPQSL…QWYQRSTASH (356 aa). Phosphoserine is present on residues Ser590 and Ser601. Residues 609–624 show a composition bias toward basic residues; the sequence is VKKRSSHGHSSSHKRF. The segment covering 626 to 658 has biased composition (polar residues); sequence STGSCTEAGVSSSLQNSPIRSLPHWNSQSSMPS. Phosphoserine occurs at positions 666 and 696. Disordered regions lie at residues 698–741 and 757–810; these read ESQG…HSSS and AEDS…QSQP. The span at 773 to 796 shows a compositional bias: low complexity; the sequence is RAAGALGSASSGSMPNLAARSGAA. 3 positions are modified to phosphoserine: Ser785, Ser854, and Ser882. Disordered stretches follow at residues 862 to 949 and 961 to 1020; these read KESW…STFV and CKAT…STDE. A compositionally biased stretch (basic and acidic residues) spans 893–910; the sequence is DGAHDKGSGRAAVSDELR. Residues 927 to 947 are compositionally biased toward low complexity; it reads SHTSSTSSDSGSQYSTSSQST. Composition is skewed to polar residues over residues 967-981, 994-1004, and 1011-1020; these read ALPQ…SSEI, TWQTGEATENS, and ESPTHQSTDE.

Interacts (via coiled-coil domain) with CYTH1 (via coiled-coil domain). Interacts with PARD3 (via coiled-coil domain). Found in a complex with PARD3, CYTH1 and FRMD4A. Interacts with CYTH2. Interacts with CYTH3.

The protein localises to the cytoplasm. It localises to the cytoskeleton. Its subcellular location is the cell junction. The protein resides in the adherens junction. It is found in the tight junction. In terms of biological role, scaffolding protein that regulates epithelial cell polarity by connecting ARF6 activation with the PAR3 complex. Plays a redundant role with FRMD4B in epithelial polarization. May regulate MAPT secretion by activating ARF6-signaling. The polypeptide is FERM domain-containing protein 4A (Frmd4a) (Mus musculus (Mouse)).